The chain runs to 371 residues: MVIQMKFFNREKEIHEILSILEGEPNIIYFIYGPLNSGKTALIKHIIENKLSDDYKVFYINFRTYLISEKREFIEAIFTTKKDDFFEKIKDKSEVLNLITKGAKILTGIPIPEVEFDKLFEEKINDAFQYLNSILLEVKKSGKQPVLILDELQMIKDVVLNWQKYLLKELFQFLVSLTKEQHLCHVFCLSSDSLFIEYVYSAGELEGRAKYLLVDDFDKETALKFMDFLAKEILNKKLSDEDKELIYNYVGGKPVYIYSVIDEMRYRKLEDILNLMLKEETQKLKYFLKELDYIKPKVELKDEIIEIKKDDIINALKLFKENYEVSDDDIPEPVYIYLVKKNILFLNPIEGILKPQSFLIWNAIKKLLNGH.

33-40 (GPLNSGKT) contacts ATP.

Belongs to the archaeal ATPase family.

This is an uncharacterized protein from Methanocaldococcus jannaschii (strain ATCC 43067 / DSM 2661 / JAL-1 / JCM 10045 / NBRC 100440) (Methanococcus jannaschii).